The primary structure comprises 543 residues: MSSAAAVADVIEAFKQRGFEFVGKTDDGWFRLHGRLTPPQADKGCPCEVQLDPTFFNLPRIRLLEIPPELPAAVPHLGADGGLCYLAKGTVVLDIYDPVGQSLACLQRAAVVFGQIMQGEMIEDLAEEFFAYWHGWHCFVDMQGEDLGRQNCIVAHANGCPLWFITDNEDRTTEKLKSLGYQVTDRTVLTYRVKTGAQPRPLTSNWPPETVGDILAWQSTLDPRCRRKIHERIKEGERKKANGVLIVIESPLMTYGFAVLYDRQSLVQKSKLIDRRDSSYGLKVMPISVVRIDDRYLAQRNMPNSKTLAGKNIAVVGCGTIGGYLSDMLVKAGAGTCGGKLTLVDFDCLLPQNIGRHRLGFPDLLSNKAEAMAKELKRLAPGAEIRALPVDVRHAQLGELDLLIDATGEESLGHWLCGHYPPPTPMLSVWIEGPGTAVRALLRTKASDACYRCLWHSNRRGEFRSITDPLPAILAGHGCEGLYVPFPASVSVHAASLGAEMTLDWVNGVYTPALRTRLIDRAQQLATPDCDPPRDRECPLCNS.

The segment at 1–159 (MSSAAAVADV…QNCIVAHANG (159 aa)) is E2-like domain. Cysteine 84 functions as the For E2-like domain in the catalytic mechanism. The interval 160–305 (CPLWFITDNE…YLAQRNMPNS (146 aa)) is linker domain. The interval 306–543 (KTLAGKNIAV…RDRECPLCNS (238 aa)) is adenylation plus E1-like domain. Catalysis depends on for E1-like domain residues cysteine 450 and cysteine 453.

The protein in the C-terminal section; belongs to the HesA/MoeB/ThiF family. Forms a Cap2-CdnA complex. A Cap2 dimer is bound on either side by a CdnA monomer.

In terms of biological role, CD-NTase priming component of a CBASS antiviral system. CBASS (cyclic oligonucleotide-based antiphage signaling system) provides immunity against bacteriophages. The CD-NTase protein (CdnA) synthesizes cyclic nucleotides in response to infection; these serve as specific second messenger signals. The signals activate a diverse range of effectors, leading to bacterial cell death and thus abortive phage infection. A type II-A(GA) CBASS system. Its function is as follows. Acts as a protein transferase, conjugating CdnA, the CD-NTase, to unidentified target(s) in the cell probably via an E1-E2 ubiquitin transferase-like mechanism. This primes CdnA, upon phage infection CdnA activates and makes cyclic nucleotides. Protein conjugation requires ATP. Functionally, the capV-cdnA-cap2-cap3 operon provides about 10(4)-fold protection in strain BWHPSA011 against infection by phage PaMx41. In P.aeruginosa strain PAO1 it confers protection against phages PaMx41 and JBD18 but not JBD67 (JBD18 and JBD67 do not replicate in BWHPSA011 / Pa011). When acb2 in JBD67 is deleted this CBASS operon then protects against JDB67 also. This CBASS system limits prophage induction of lysogenized JBD67 as well as viral lytic replication. This chain is ATP-dependent ubiquitin transferase-like protein Cap2, found in Pseudomonas aeruginosa (strain BWHPSA011 / Pa011).